The primary structure comprises 386 residues: Phosphoglycerate kinase (386 aa).

Substrate-binding positions include 21–23 (DLN), R36, 59–62 (HLGR), R113, and R146. Residues K197, E313, and 339-342 (GGDT) contribute to the ATP site.

It belongs to the phosphoglycerate kinase family. In terms of assembly, monomer.

The protein localises to the cytoplasm. It carries out the reaction (2R)-3-phosphoglycerate + ATP = (2R)-3-phospho-glyceroyl phosphate + ADP. It participates in carbohydrate degradation; glycolysis; pyruvate from D-glyceraldehyde 3-phosphate: step 2/5. The sequence is that of Phosphoglycerate kinase from Serratia proteamaculans (strain 568).